The following is a 433-amino-acid chain: MSWNHQSVEIAVRRTTVPSPNLPPGFDFTDPAIYAERLPVAEFAELRSAAPIWWNGQDPGKGGGFHDGGFWAITKLNDVKEISRHSDVFSSYENGVIPRFKNDIAREDIEVQRFVMLNMDAPHHTRLRKIISRGFTPRAVGRLHDELQERAQKIAAEAAAAGSGDFVEQVSCELPLQAIAGLLGVPQEDRGKLFHWSNEMTGNEDPEYAHIDPKASSAELIGYAMKMAEEKAKNPADDIVTQLIQADIDGEKLSDDEFGFFVVMLAVAGNETTRNSITQGMMAFAEHPDQWELYKKVRPETAADEIVRWATPVTAFQRTALRDYELSGVQIKKGQRVVMFYRSANFDEEVFQDPFTFNILRNPNPHVGFGGTGAHYCIGANLARMTINLIFNAVADHMPDLKPISAPERLRSGWLNGIKHWQVDYTGRCPVAH.

Gly-202 is a binding site for substrate. Cys-377 contributes to the heme binding site.

It belongs to the cytochrome P450 family. Heme is required as a cofactor.

The catalysed reaction is cholest-4-en-3-one + 6 reduced [2Fe-2S]-[ferredoxin] + 3 O2 + 5 H(+) = (25S)-3-oxocholest-4-en-26-oate + 6 oxidized [2Fe-2S]-[ferredoxin] + 4 H2O. The protein operates within steroid metabolism; cholesterol degradation. Functionally, involved in the utilization of cholesterol as the sole carbon and energy source by degrading the side chain during infection. Primarily catalyzes the sequential oxidation of the terminal methyl of cholest-4-en-3-one into (25S)-26-hydroxycholest-4-en-3-one (alcohol), (25S)-26-oxocholest-4-en-3-one (aldehyde), to finally yield the carboxylic acid (25S)-3-oxocholest-4-en-26-oate. Also able to sequentially oxidize cholesterol itself, not only cholest-4-en-3-one. The polypeptide is Steroid C26-monooxygenase (cyp125) (Mycobacterium bovis (strain ATCC BAA-935 / AF2122/97)).